The primary structure comprises 272 residues: MKKFLLKPKKSLGQNFILSSEITKKIVALAGSLENFNVIEIGPGYGALTREILVHNPKSLLSIEKDRDLVKHHDQLLNEHQGKYRIIEADALHVTEEELIERPVKVIANLPYNISVVLFLKWLNNIKFFTNLTLMFQKEVADRITARPNSKDYGSLSVLSQLLCDIKKEFDIEPKEFFPRPKIHSSVITVNPLPIPKFAVNLETLTRLTRAVFSQRRKMLRNSLQNITNHTETVLENAKLSGNERPENLTIEQFCLLANNVECLFCKSPIAI.

Positions 15, 17, 42, 64, 90, and 109 each coordinate S-adenosyl-L-methionine.

It belongs to the class I-like SAM-binding methyltransferase superfamily. rRNA adenine N(6)-methyltransferase family. RsmA subfamily.

Its subcellular location is the cytoplasm. It catalyses the reaction adenosine(1518)/adenosine(1519) in 16S rRNA + 4 S-adenosyl-L-methionine = N(6)-dimethyladenosine(1518)/N(6)-dimethyladenosine(1519) in 16S rRNA + 4 S-adenosyl-L-homocysteine + 4 H(+). Functionally, specifically dimethylates two adjacent adenosines (A1518 and A1519) in the loop of a conserved hairpin near the 3'-end of 16S rRNA in the 30S particle. May play a critical role in biogenesis of 30S subunits. The chain is Ribosomal RNA small subunit methyltransferase A from Wolbachia sp. subsp. Drosophila simulans (strain wRi).